A 469-amino-acid chain; its full sequence is MQQNTVTLILVGVIIFLFISLFFYVIYSFVQKKKNRNFKQIKIQPKKNNKITPTSDQKLKADEFISIINKKREILNHQRADYLKIKETQESYQQLQEVISEYQKKLNLEKIKLIDQMEKEIKDNLNEKAVYYMINAMEQHAEDIISSKFSFTIKLENEGMKGKIIGKDGRNKRHFEQTTKTDLIIEPNMPAITISSPNPIRREKAKRTMEKLLETKNMDIAKISLFYKEVEEGFEQTCYEIGKDALENKLHIFDIDKKMYPIVGQLNFRTSYSQNVLLHCVEAAVLAANIAQKLNIDPIKAKKAAFFHDIGKAVDFEIDNDHVNSGVELAKKFNFEDYIINAIESHHNKVSPKTVYAALVKVVDKLSASRPGARFVSNDEYFKRIEELEKICKSFEGVSDAYVIKSGREIEVIIDPSLVSDDECKILIKDIKFKLEDSDLVNKQPIQITLIRKFTQSITTLGSASRLRT.

The helical transmembrane segment at 6–26 threads the bilayer; the sequence is VTLILVGVIIFLFISLFFYVI. The KH domain maps to 149 to 209; sequence FSFTIKLENE…IRREKAKRTM (61 aa). In terms of domain architecture, HD spans 276 to 369; it reads VLLHCVEAAV…VKVVDKLSAS (94 aa).

It belongs to the RNase Y family.

The protein localises to the cell membrane. Endoribonuclease that initiates mRNA decay. This chain is Ribonuclease Y, found in Malacoplasma penetrans (strain HF-2) (Mycoplasma penetrans).